A 211-amino-acid chain; its full sequence is MFRNSYIQQNSDIQAAGGLVPMVVEQSARGERAYDIYSRLLKERVIFLVGPVEDYMANLICAQLLFLEAENPDKDIHLYINSPGGSVTAGMSIYDTMQFIKPNVSTTCIGQACSMGAFLLTAGAEGKRFCLPNSRVMIHQPLGGFQGQASDIEIHAKEILFIRERLNTLMAKHSGHTLEEIERDTNRDNFMSAEAARDYGLIDAVIDKRPA.

Ser114 serves as the catalytic Nucleophile. The active site involves His139.

The protein belongs to the peptidase S14 family. As to quaternary structure, fourteen ClpP subunits assemble into 2 heptameric rings which stack back to back to give a disk-like structure with a central cavity, resembling the structure of eukaryotic proteasomes.

The protein resides in the cytoplasm. The enzyme catalyses Hydrolysis of proteins to small peptides in the presence of ATP and magnesium. alpha-casein is the usual test substrate. In the absence of ATP, only oligopeptides shorter than five residues are hydrolyzed (such as succinyl-Leu-Tyr-|-NHMec, and Leu-Tyr-Leu-|-Tyr-Trp, in which cleavage of the -Tyr-|-Leu- and -Tyr-|-Trp bonds also occurs).. Its function is as follows. Cleaves peptides in various proteins in a process that requires ATP hydrolysis. Has a chymotrypsin-like activity. Plays a major role in the degradation of misfolded proteins. The chain is ATP-dependent Clp protease proteolytic subunit from Pseudomonas fluorescens (strain SBW25).